The following is a 345-amino-acid chain: Beta-2-glycoprotein 1 (345 aa).

An N-terminal signal peptide occupies residues 1–19 (MISPVLILFSSFLCHVAIA). 4 consecutive Sushi domains span residues 21–81 (RTCP…KCTP), 82–139 (RVCP…VCAP), 140–202 (ITCP…ECRE), and 203–262 (VKCP…SCKA). Cystine bridges form between Cys-23–Cys-66, Cys-51–Cys-79, Cys-84–Cys-124, Cys-110–Cys-137, Cys-142–Cys-188, Cys-174–Cys-200, Cys-205–Cys-248, Cys-234–Cys-260, Cys-264–Cys-315, Cys-300–Cys-325, and Cys-307–Cys-345. Thr-33 is a glycosylation site (O-linked (GalNAc...) threonine). A glycan (O-linked (GalNAc...) threonine) is linked at Thr-149. 3 N-linked (GlcNAc...) asparagine glycosylation sites follow: Asn-162, Asn-183, and Asn-193. Asn-253 is a glycosylation site (N-linked (GlcNAc...) asparagine). Residues 263 to 345 (SCKVPVKKAT…KTDASDVKPC (83 aa)) are sushi-like.

Expressed by the liver and secreted in plasma.

Its subcellular location is the secreted. Binds to various kinds of negatively charged substances such as heparin, phospholipids, and dextran sulfate. May prevent activation of the intrinsic blood coagulation cascade by binding to phospholipids on the surface of damaged cells. The sequence is that of Beta-2-glycoprotein 1 (APOH) from Pan troglodytes (Chimpanzee).